Consider the following 87-residue polypeptide: Small ribosomal subunit protein uS15 (87 aa).

It belongs to the universal ribosomal protein uS15 family. Part of the 30S ribosomal subunit. Forms a bridge to the 50S subunit in the 70S ribosome, contacting the 23S rRNA.

Its function is as follows. One of the primary rRNA binding proteins, it binds directly to 16S rRNA where it helps nucleate assembly of the platform of the 30S subunit by binding and bridging several RNA helices of the 16S rRNA. Functionally, forms an intersubunit bridge (bridge B4) with the 23S rRNA of the 50S subunit in the ribosome. The chain is Small ribosomal subunit protein uS15 from Pseudothermotoga lettingae (strain ATCC BAA-301 / DSM 14385 / NBRC 107922 / TMO) (Thermotoga lettingae).